Here is a 60-residue protein sequence, read N- to C-terminus: Large ribosomal subunit protein bL33 (60 aa).

Belongs to the bacterial ribosomal protein bL33 family.

The sequence is that of Large ribosomal subunit protein bL33 from Pelodictyon phaeoclathratiforme (strain DSM 5477 / BU-1).